We begin with the raw amino-acid sequence, 397 residues long: Xylose isomerase (397 aa).

Active-site residues include H54 and D57. The Mg(2+) site is built by E181, E217, H220, D245, D255, D257, and D293.

This sequence belongs to the xylose isomerase family. As to quaternary structure, homotetramer. Mg(2+) serves as cofactor.

Its subcellular location is the cytoplasm. The enzyme catalyses alpha-D-xylose = alpha-D-xylulofuranose. The protein is Xylose isomerase of Clavibacter sepedonicus (Clavibacter michiganensis subsp. sepedonicus).